Consider the following 127-residue polypeptide: Protein ApaG (127 aa).

An ApaG domain is found at 3 to 127; the sequence is DQPPTEIQIS…FRLAAATVFH (125 aa).

This chain is Protein ApaG, found in Acidithiobacillus ferrooxidans (strain ATCC 23270 / DSM 14882 / CIP 104768 / NCIMB 8455) (Ferrobacillus ferrooxidans (strain ATCC 23270)).